Consider the following 382-residue polypeptide: Lipid-A-disaccharide synthase (382 aa).

This sequence belongs to the LpxB family.

It catalyses the reaction 2-N,3-O-bis[(3R)-3-hydroxytetradecanoyl]-alpha-D-glucosaminyl 1-phosphate + UDP-2-N,3-O-bis[(3R)-3-hydroxytetradecanoyl]-alpha-D-glucosamine = lipid A disaccharide (E. coli) + UDP + H(+). It carries out the reaction a lipid X + a UDP-2-N,3-O-bis[(3R)-3-hydroxyacyl]-alpha-D-glucosamine = a lipid A disaccharide + UDP + H(+). The protein operates within glycolipid biosynthesis; lipid IV(A) biosynthesis; lipid IV(A) from (3R)-3-hydroxytetradecanoyl-[acyl-carrier-protein] and UDP-N-acetyl-alpha-D-glucosamine: step 5/6. Its function is as follows. Condensation of UDP-2,3-diacylglucosamine and 2,3-diacylglucosamine-1-phosphate to form lipid A disaccharide, a precursor of lipid A, a phosphorylated glycolipid that anchors the lipopolysaccharide to the outer membrane of the cell. This Escherichia coli O17:K52:H18 (strain UMN026 / ExPEC) protein is Lipid-A-disaccharide synthase.